The following is a 420-amino-acid chain: ATP phosphoribosyltransferase regulatory subunit (420 aa).

The protein belongs to the class-II aminoacyl-tRNA synthetase family. HisZ subfamily. As to quaternary structure, heteromultimer composed of HisG and HisZ subunits.

Its subcellular location is the cytoplasm. It participates in amino-acid biosynthesis; L-histidine biosynthesis; L-histidine from 5-phospho-alpha-D-ribose 1-diphosphate: step 1/9. Required for the first step of histidine biosynthesis. May allow the feedback regulation of ATP phosphoribosyltransferase activity by histidine. The protein is ATP phosphoribosyltransferase regulatory subunit of Bacillus cereus (strain AH187).